A 72-amino-acid chain; its full sequence is Cell division protein ZapB (72 aa).

The stretch at 1–72 (MSSEILDQLE…RSLLGQIDNV (72 aa)) forms a coiled coil.

The protein belongs to the ZapB family. In terms of assembly, homodimer. The ends of the coiled-coil dimer bind to each other, forming polymers. Interacts with FtsZ.

The protein resides in the cytoplasm. In terms of biological role, non-essential, abundant cell division factor that is required for proper Z-ring formation. It is recruited early to the divisome by direct interaction with FtsZ, stimulating Z-ring assembly and thereby promoting cell division earlier in the cell cycle. Its recruitment to the Z-ring requires functional FtsA or ZipA. This Actinobacillus succinogenes (strain ATCC 55618 / DSM 22257 / CCUG 43843 / 130Z) protein is Cell division protein ZapB.